The following is a 511-amino-acid chain: Phosphoenolpyruvate carboxylase (511 aa).

Belongs to the PEPCase type 2 family. In terms of assembly, homotetramer. The cofactor is Mg(2+).

It carries out the reaction oxaloacetate + phosphate = phosphoenolpyruvate + hydrogencarbonate. Its function is as follows. Catalyzes the irreversible beta-carboxylation of phosphoenolpyruvate (PEP) to form oxaloacetate (OAA), a four-carbon dicarboxylic acid source for the tricarboxylic acid cycle. This chain is Phosphoenolpyruvate carboxylase, found in Saccharolobus islandicus (strain Y.N.15.51 / Yellowstone #2) (Sulfolobus islandicus).